Consider the following 272-residue polypeptide: Putative phosphoenolpyruvate synthase regulatory protein (272 aa).

Residue 152 to 159 (GVSRSGKT) coordinates ADP.

The protein belongs to the pyruvate, phosphate/water dikinase regulatory protein family. PSRP subfamily.

It catalyses the reaction [pyruvate, water dikinase] + ADP = [pyruvate, water dikinase]-phosphate + AMP + H(+). It carries out the reaction [pyruvate, water dikinase]-phosphate + phosphate + H(+) = [pyruvate, water dikinase] + diphosphate. Its function is as follows. Bifunctional serine/threonine kinase and phosphorylase involved in the regulation of the phosphoenolpyruvate synthase (PEPS) by catalyzing its phosphorylation/dephosphorylation. The sequence is that of Putative phosphoenolpyruvate synthase regulatory protein from Alcanivorax borkumensis (strain ATCC 700651 / DSM 11573 / NCIMB 13689 / SK2).